We begin with the raw amino-acid sequence, 261 residues long: Calbindin (261 aa).

Position 2 is an N-acetylalanine (Ala2). Positions 2–7 (AESHLQ) are interaction with RANBP9. EF-hand domains follow at residues 11 to 46 (ITAS…LQQA), 53 to 88 (ELSP…EENF), 98 to 133 (KSCE…LLEK), 142 to 177 (KLAE…QENF), and 186 to 221 (MCGK…LCEK). 5 residues coordinate Ca(2+): Asp24, Asp26, Ser28, Tyr30, and Glu35. Residues Asp111, Asp113, Glu122, Asp155, Asn157, Asp159, Lys161, Glu166, Asp199, Asp201, Asn203, Tyr205, and Glu210 each contribute to the Ca(2+) site.

The protein belongs to the calbindin family. As to quaternary structure, interacts with RANBP9.

In terms of biological role, buffers cytosolic calcium. May stimulate a membrane Ca(2+)-ATPase and a 3',5'-cyclic nucleotide phosphodiesterase. This chain is Calbindin (CALB1), found in Pongo abelii (Sumatran orangutan).